A 580-amino-acid polypeptide reads, in one-letter code: MKMLVEKIEKKFDQEKVIEEFEDLTKDAGKIQEETLKKILEQNGGTEYLQLWGLNGRTDPQTFKNCVPIVTHNDLEPYIQRIADGDLSPILTGKPIETISLSSGTTQGKPKFVPFNDELMESTMQIFKTSFAFRNREFPIGNGKALQFIYSSKQFKTKGGLAAGTATTNVYRNAQFKKTMKAMCTPCCSPDEVIFGPDFHQSLYCHLLCGLIFHDEVQVVSSTFAHSIVHAFRTFEQVWEALVVDIREGVLSSRVTVPSIRLAMSKLLKPDPELADTIYNKCSRLSNWYGLIPDLFPNTRYIYGIMTGSMEPYLKKLRHYAGELPLLSADYGSSEGWVGVNVNPKLPPELVTYAVLPNIGYFEFIPLGGNLNGIEQANSPVGLTEVKLGEEYEVVFTNFAGLYRYRLGDVVKVKGFHNGTPELQFVCRSNLLLSINIDKNTEKDLQLAVEAAAKRLVDEKLEVVDFTSHVNVSADPGHYVIFWELSGEATDEMLQDCCNCLDRSFIDAGYVSSRKVNAIGALELRIVKRGTFHKILDHFVGLGGAVSQFKTPRCVGPKNSSLLQILSSNVVETYVSTAFC.

S100 lines the ATP pocket. A jasmonate-binding site is contributed by S103. ATP is bound by residues M120, T123, G164, N169, and 332–337; that span reads GSSEGW. 167–171 contributes to the an L-alpha-amino acid binding site; the sequence is TTNVY. Residue 329–332 participates in jasmonate binding; that stretch reads ADYG. 534–538 lines the an L-alpha-amino acid pocket; the sequence is KILDH.

It belongs to the IAA-amido conjugating enzyme family.

The enzyme catalyses a jasmonate + an L-alpha-amino acid + ATP = a jasmonyl-L-amino acid + AMP + diphosphate + H(+). Its function is as follows. Catalyzes the synthesis of jasmonate-amino acid conjugates by adenylation. Catalyzes the conjugation of jasmonate (JA) to Ile, Leu and Val. Catalyzes the conjugation of JA to Ile that may mediate defense signaling and resistance to the herbivore Manduca sexta caterpillars. This Nicotiana attenuata (Coyote tobacco) protein is Jasmonoyl--L-amino acid synthetase JAR6 (JAR6).